Here is a 438-residue protein sequence, read N- to C-terminus: Trigger factor (438 aa).

One can recognise a PPIase FKBP-type domain in the interval 160–245 (DDKVTIDFVG…VKKIQQAELP (86 aa)).

This sequence belongs to the FKBP-type PPIase family. Tig subfamily.

The protein localises to the cytoplasm. It catalyses the reaction [protein]-peptidylproline (omega=180) = [protein]-peptidylproline (omega=0). Functionally, involved in protein export. Acts as a chaperone by maintaining the newly synthesized protein in an open conformation. Functions as a peptidyl-prolyl cis-trans isomerase. This is Trigger factor from Francisella tularensis subsp. holarctica (strain OSU18).